Reading from the N-terminus, the 379-residue chain is Acyl-CoA dehydrogenase, short-chain specific (379 aa).

Belongs to the acyl-CoA dehydrogenase family. Requires FAD as cofactor.

It carries out the reaction butanoyl-CoA + oxidized [electron-transfer flavoprotein] + H(+) = (2E)-butenoyl-CoA + reduced [electron-transfer flavoprotein]. The catalysed reaction is a short-chain 2,3-saturated fatty acyl-CoA + oxidized [electron-transfer flavoprotein] + H(+) = a short-chain (2E)-enoyl-CoA + reduced [electron-transfer flavoprotein]. Its pathway is lipid metabolism; butanoate metabolism. The chain is Acyl-CoA dehydrogenase, short-chain specific (bcd) from Clostridium acetobutylicum (strain ATCC 824 / DSM 792 / JCM 1419 / IAM 19013 / LMG 5710 / NBRC 13948 / NRRL B-527 / VKM B-1787 / 2291 / W).